A 418-amino-acid chain; its full sequence is Gamma-glutamyl phosphate reductase (418 aa).

It belongs to the gamma-glutamyl phosphate reductase family.

Its subcellular location is the cytoplasm. The catalysed reaction is L-glutamate 5-semialdehyde + phosphate + NADP(+) = L-glutamyl 5-phosphate + NADPH + H(+). Its pathway is amino-acid biosynthesis; L-proline biosynthesis; L-glutamate 5-semialdehyde from L-glutamate: step 2/2. Functionally, catalyzes the NADPH-dependent reduction of L-glutamate 5-phosphate into L-glutamate 5-semialdehyde and phosphate. The product spontaneously undergoes cyclization to form 1-pyrroline-5-carboxylate. This is Gamma-glutamyl phosphate reductase from Histophilus somni (strain 129Pt) (Haemophilus somnus).